A 165-amino-acid chain; its full sequence is MTEKIGLFTGTFDPLTNGHLDVIKRASQHFDQLYVGIFKNDQKNPLFPTDKRVEMLEEALTSLSVTHKVKVIKHERDLTVNIAKKLGVTALVRSLRNSQDLEYEKNMFYFNMEMTGIETIFFLAKPELEPLNSTRMRELHAFGQDVSAWVPENVSRELRKLDEKK.

T11 is a binding site for substrate. ATP contacts are provided by residues 11 to 12 (TF) and H19. Substrate-binding residues include K43, T79, and R93. Residues E104 and 128–134 (LEPLNST) each bind ATP.

The protein belongs to the bacterial CoaD family. Homohexamer. Requires Mg(2+) as cofactor.

Its subcellular location is the cytoplasm. It carries out the reaction (R)-4'-phosphopantetheine + ATP + H(+) = 3'-dephospho-CoA + diphosphate. The protein operates within cofactor biosynthesis; coenzyme A biosynthesis; CoA from (R)-pantothenate: step 4/5. In terms of biological role, reversibly transfers an adenylyl group from ATP to 4'-phosphopantetheine, yielding dephospho-CoA (dPCoA) and pyrophosphate. The protein is Phosphopantetheine adenylyltransferase of Lactococcus lactis subsp. lactis (strain IL1403) (Streptococcus lactis).